Here is a 282-residue protein sequence, read N- to C-terminus: N-methyltransferase gliN (282 aa).

Belongs to the methyltransferase superfamily. LaeA methyltransferase family.

The protein operates within mycotoxin biosynthesis. N-methyltransferase; part of the gene cluster that mediates the biosynthesis of gliotoxin, a member of the epipolythiodioxopiperazine (ETP) class of toxins characterized by a disulfide bridged cyclic dipeptide. The first step in gliotoxin biosynthesis is the condensation of serine and phenylalanine to form the cyclo-L-phenylalanyl-L-serine diketopiperazine (DKP) by the NRPS gliP. GliP is also able to produce the DKP cyclo-L-tryptophanyl-L-serine, suggesting that the substrate specificity of the first adenylation (A) domain in gliP is sufficiently relaxed to accommodate both L-Phe and L-Trp. The cytochrome P450 monooxygenase gliC has been shown to catalyze the subsequent hydroxylation of the alpha-carbon of L-Phe in cyclo-L-phenylalanyl-L-serine whereas the second cytochrome P450 enzyme, gliF, is presumably involved in the modification of the DKP side chain. The glutathione S-transferase (GST) gliG then forms a bis-glutathionylated biosynthetic intermediate which is responsible for the sulfurization of gliotoxin. This bis-glutathionylated intermediate is subsequently processed by the gamma-glutamyl cyclotransferase gliK to remove both gamma-glutamyl moieties. Subsequent processing via gliI yields a biosynthetic intermediate, which is N-methylated via the N-methyltransferase gliN, before the gliotoxin oxidoreductase gliT-mediated disulfide bridge closure. GliN-mediated amide methylation confers stability to ETP, damping the spontaneous formation of tri- and tetrasulfides. Intracellular dithiol gliotoxin oxidized by gliT is subsequently effluxed by gliA. Gliotoxin contributes to pathogenesis during invasive aspergillosis. In macrophages and neutrophils, gliotoxin showed inhibition of various different cell functions including cytokine production, antigen presentation, phagocytosis, and production of reactive oxygen species. In Aspergillus fumigatus (strain ATCC MYA-4609 / CBS 101355 / FGSC A1100 / Af293) (Neosartorya fumigata), this protein is N-methyltransferase gliN.